Here is an 805-residue protein sequence, read N- to C-terminus: Leucine--tRNA ligase (805 aa).

The short motif at 40 to 51 (PYPSGQGLHVGH) is the 'HIGH' region element. The 'KMSKS' region motif lies at 577–581 (KMSKS). ATP is bound at residue Lys-580.

It belongs to the class-I aminoacyl-tRNA synthetase family.

The protein resides in the cytoplasm. It carries out the reaction tRNA(Leu) + L-leucine + ATP = L-leucyl-tRNA(Leu) + AMP + diphosphate. The chain is Leucine--tRNA ligase from Pediococcus pentosaceus (strain ATCC 25745 / CCUG 21536 / LMG 10740 / 183-1w).